The chain runs to 331 residues: Major outer membrane protein P.IB (331 aa).

The N-terminal stretch at 1-19 (MKKSLIALTLAALPVAAMA) is a signal peptide.

Belongs to the Gram-negative porin family. Homotrimer.

The protein resides in the cell outer membrane. Functionally, serves as a slightly cation selective porin. This chain is Major outer membrane protein P.IB (porB), found in Neisseria meningitidis serogroup B.